We begin with the raw amino-acid sequence, 222 residues long: 2-C-methyl-D-erythritol 4-phosphate cytidylyltransferase (222 aa).

Belongs to the IspD/TarI cytidylyltransferase family. IspD subfamily.

The enzyme catalyses 2-C-methyl-D-erythritol 4-phosphate + CTP + H(+) = 4-CDP-2-C-methyl-D-erythritol + diphosphate. Its pathway is isoprenoid biosynthesis; isopentenyl diphosphate biosynthesis via DXP pathway; isopentenyl diphosphate from 1-deoxy-D-xylulose 5-phosphate: step 2/6. Its function is as follows. Catalyzes the formation of 4-diphosphocytidyl-2-C-methyl-D-erythritol from CTP and 2-C-methyl-D-erythritol 4-phosphate (MEP). This chain is 2-C-methyl-D-erythritol 4-phosphate cytidylyltransferase, found in Porphyromonas gingivalis (strain ATCC 33277 / DSM 20709 / CIP 103683 / JCM 12257 / NCTC 11834 / 2561).